Reading from the N-terminus, the 251-residue chain is Probable phosphatase Sama_2233 (251 aa).

Residues His-8, His-10, His-16, His-41, Glu-74, His-102, His-132, Asp-193, and His-195 each contribute to the Zn(2+) site.

This sequence belongs to the PHP family. Zn(2+) serves as cofactor.

This Shewanella amazonensis (strain ATCC BAA-1098 / SB2B) protein is Probable phosphatase Sama_2233.